Consider the following 73-residue polypeptide: Translation initiation factor IF-1 (73 aa).

The S1-like domain maps to M1–K72.

It belongs to the IF-1 family. Component of the 30S ribosomal translation pre-initiation complex which assembles on the 30S ribosome in the order IF-2 and IF-3, IF-1 and N-formylmethionyl-tRNA(fMet); mRNA recruitment can occur at any time during PIC assembly.

The protein resides in the cytoplasm. In terms of biological role, one of the essential components for the initiation of protein synthesis. Stabilizes the binding of IF-2 and IF-3 on the 30S subunit to which N-formylmethionyl-tRNA(fMet) subsequently binds. Helps modulate mRNA selection, yielding the 30S pre-initiation complex (PIC). Upon addition of the 50S ribosomal subunit IF-1, IF-2 and IF-3 are released leaving the mature 70S translation initiation complex. This is Translation initiation factor IF-1 from Legionella pneumophila (strain Paris).